The following is a 423-amino-acid chain: Histidine--tRNA ligase (423 aa).

The protein belongs to the class-II aminoacyl-tRNA synthetase family. Homodimer.

The protein localises to the cytoplasm. The enzyme catalyses tRNA(His) + L-histidine + ATP = L-histidyl-tRNA(His) + AMP + diphosphate + H(+). In Rhodococcus erythropolis (strain PR4 / NBRC 100887), this protein is Histidine--tRNA ligase.